A 400-amino-acid chain; its full sequence is Formate-dependent phosphoribosylglycinamide formyltransferase (400 aa).

Residues 22–23 (EL) and Glu82 each bind N(1)-(5-phospho-beta-D-ribosyl)glycinamide. Residues Arg115, Lys156, 161 to 166 (SSGKGQ), 196 to 199 (EGFI), and Glu204 contribute to the ATP site. The region spanning 120–309 (RLAAETLGLP…EFALHARAIL (190 aa)) is the ATP-grasp domain. Residues Glu268 and Glu280 each contribute to the Mg(2+) site. N(1)-(5-phospho-beta-D-ribosyl)glycinamide is bound by residues Asp287, Lys361, and 368-369 (RR).

The protein belongs to the PurK/PurT family. As to quaternary structure, homodimer.

The catalysed reaction is N(1)-(5-phospho-beta-D-ribosyl)glycinamide + formate + ATP = N(2)-formyl-N(1)-(5-phospho-beta-D-ribosyl)glycinamide + ADP + phosphate + H(+). Its pathway is purine metabolism; IMP biosynthesis via de novo pathway; N(2)-formyl-N(1)-(5-phospho-D-ribosyl)glycinamide from N(1)-(5-phospho-D-ribosyl)glycinamide (formate route): step 1/1. Its function is as follows. Involved in the de novo purine biosynthesis. Catalyzes the transfer of formate to 5-phospho-ribosyl-glycinamide (GAR), producing 5-phospho-ribosyl-N-formylglycinamide (FGAR). Formate is provided by PurU via hydrolysis of 10-formyl-tetrahydrofolate. This is Formate-dependent phosphoribosylglycinamide formyltransferase from Xanthomonas axonopodis pv. citri (strain 306).